Reading from the N-terminus, the 316-residue chain is Olfactory receptor 2AG1 (316 aa).

Topologically, residues 1-25 are extracellular; the sequence is MELWNFTLGSGFILVGILNDSGSPE. 2 N-linked (GlcNAc...) asparagine glycosylation sites follow: N5 and N19. Residues 26-49 form a helical membrane-spanning segment; the sequence is LLCATITILYLLALISNGLLLLAI. Residues 50-57 are Cytoplasmic-facing; the sequence is TMEARLHM. Residues 58–79 traverse the membrane as a helical segment; it reads PMYLLLGQLSLMDLLFTSVVTP. Over 80 to 100 the chain is Extracellular; that stretch reads KALADFLRRENTISFGGCALQ. C97 and C189 are joined by a disulfide. The chain crosses the membrane as a helical span at residues 101 to 120; sequence MFLALTMGGAEDLLLAFMAY. At 121-139 the chain is on the cytoplasmic side; that stretch reads DRYVAICHPLTYMTLMSSR. The chain crosses the membrane as a helical span at residues 140-158; that stretch reads ACWLMVATSWILASLSALI. Over 159–195 the chain is Extracellular; it reads YTVYTMHYPFCRAQEIRHLLCEIPHLLKVACADTSRY. Residues 196-219 traverse the membrane as a helical segment; the sequence is ELMVYVMGVTFLIPSLAAILASYT. Residues 220–236 lie on the Cytoplasmic side of the membrane; that stretch reads QILLTVLHMPSNEGRKK. The helical transmembrane segment at 237-259 threads the bilayer; the sequence is ALVTCSSHLTVVGMFYGAATFMY. Over 260–272 the chain is Extracellular; it reads VLPSSFHSTRQDN. Residues 273 to 292 form a helical membrane-spanning segment; the sequence is IISVFYTIVTPALNPLIYSL. At 293 to 316 the chain is on the cytoplasmic side; the sequence is RNKEVMRALRRVLGKYMLPAHSTL.

It belongs to the G-protein coupled receptor 1 family.

It localises to the cell membrane. Odorant receptor. This Homo sapiens (Human) protein is Olfactory receptor 2AG1 (OR2AG1).